Reading from the N-terminus, the 257-residue chain is Phosphatidylglycerol--prolipoprotein diacylglyceryl transferase (257 aa).

The next 4 membrane-spanning stretches (helical) occupy residues 8–28 (IFGL…ILAY), 48–68 (VFIV…VIFN), 84–104 (EGGL…YLMS), and 109–129 (LNFL…QAIG). R130 is an a 1,2-diacyl-sn-glycero-3-phospho-(1'-sn-glycerol) binding site. The next 3 helical transmembrane spans lie at 169–189 (PTFL…LLIT), 196–216 (GSIF…IEGL), and 225–245 (SLRM…ILII).

Belongs to the Lgt family.

It is found in the cell membrane. It catalyses the reaction L-cysteinyl-[prolipoprotein] + a 1,2-diacyl-sn-glycero-3-phospho-(1'-sn-glycerol) = an S-1,2-diacyl-sn-glyceryl-L-cysteinyl-[prolipoprotein] + sn-glycerol 1-phosphate + H(+). The protein operates within protein modification; lipoprotein biosynthesis (diacylglyceryl transfer). In terms of biological role, catalyzes the transfer of the diacylglyceryl group from phosphatidylglycerol to the sulfhydryl group of the N-terminal cysteine of a prolipoprotein, the first step in the formation of mature lipoproteins. This is Phosphatidylglycerol--prolipoprotein diacylglyceryl transferase from Clostridium novyi (strain NT).